We begin with the raw amino-acid sequence, 350 residues long: Biotin synthase (350 aa).

In terms of domain architecture, Radical SAM core spans 38–256 (NYVQVSTLLS…IAVARIMMPE (219 aa)). Residues Cys-53, Cys-57, and Cys-60 each coordinate [4Fe-4S] cluster. [2Fe-2S] cluster-binding residues include Cys-97, Cys-128, Cys-188, and Arg-260.

It belongs to the radical SAM superfamily. Biotin synthase family. As to quaternary structure, homodimer. Requires [4Fe-4S] cluster as cofactor. The cofactor is [2Fe-2S] cluster.

The enzyme catalyses (4R,5S)-dethiobiotin + (sulfur carrier)-SH + 2 reduced [2Fe-2S]-[ferredoxin] + 2 S-adenosyl-L-methionine = (sulfur carrier)-H + biotin + 2 5'-deoxyadenosine + 2 L-methionine + 2 oxidized [2Fe-2S]-[ferredoxin]. It participates in cofactor biosynthesis; biotin biosynthesis; biotin from 7,8-diaminononanoate: step 2/2. Functionally, catalyzes the conversion of dethiobiotin (DTB) to biotin by the insertion of a sulfur atom into dethiobiotin via a radical-based mechanism. The chain is Biotin synthase from Aliivibrio salmonicida (strain LFI1238) (Vibrio salmonicida (strain LFI1238)).